Consider the following 824-residue polypeptide: Ent-copalyl diphosphate synthase AN1, chloroplastic (824 aa).

Residues 1–63 (MPYPHPYPWQ…SSAKVFQTSR (63 aa)) constitute a chloroplast transit peptide. Positions 1-87 (MPYPHPYPWQ…QDLEDEHQAE (87 aa)) are disordered. Positions 44 to 63 (ATTTQQPDNVSSAKVFQTSR) are enriched in polar residues. Lysine 247 provides a ligand contact to substrate. Mg(2+)-binding residues include aspartate 379 and aspartate 381. The DXDD motif signature appears at 379–382 (DVDD). Lysine 465 provides a ligand contact to substrate.

This sequence belongs to the terpene synthase family. Tpsc subfamily. The cofactor is Mg(2+).

The protein localises to the plastid. It localises to the chloroplast. The enzyme catalyses (2E,6E,10E)-geranylgeranyl diphosphate = ent-copalyl diphosphate. The protein operates within plant hormone biosynthesis; gibberellin biosynthesis. In terms of biological role, involved in giberellin biosynthesis. Catalyzes the conversion of geranylgeranyl diphosphate to the gibberellin precursor ent-copalyl diphosphate. This chain is Ent-copalyl diphosphate synthase AN1, chloroplastic, found in Zea mays (Maize).